Reading from the N-terminus, the 415-residue chain is Tyrosine--tRNA ligase (415 aa).

Residue Y40 participates in L-tyrosine binding. Positions 45–54 (ATAKSLHVGS) match the 'HIGH' region motif. The L-tyrosine site is built by Y178 and Q182. A 'KMSKS' region motif is present at residues 238–242 (KMGKS). K241 provides a ligand contact to ATP. The region spanning 350 to 414 (ASIVQLIVKT…GKKRHALVQL (65 aa)) is the S4 RNA-binding domain.

It belongs to the class-I aminoacyl-tRNA synthetase family. TyrS type 1 subfamily. Homodimer.

Its subcellular location is the cytoplasm. The enzyme catalyses tRNA(Tyr) + L-tyrosine + ATP = L-tyrosyl-tRNA(Tyr) + AMP + diphosphate + H(+). Its function is as follows. Catalyzes the attachment of tyrosine to tRNA(Tyr) in a two-step reaction: tyrosine is first activated by ATP to form Tyr-AMP and then transferred to the acceptor end of tRNA(Tyr). This Ruegeria pomeroyi (strain ATCC 700808 / DSM 15171 / DSS-3) (Silicibacter pomeroyi) protein is Tyrosine--tRNA ligase.